The primary structure comprises 166 residues: Lipoprotein signal peptidase (166 aa).

Transmembrane regions (helical) follow at residues 9–29, 45–65, 71–91, and 100–120; these read ASGA…FDQL, ALTS…FGFL, WQRW…CFLL, and FSVS…DRLV. Residues D126 and D144 contribute to the active site. The helical transmembrane segment at 135 to 155 threads the bilayer; that stretch reads WHFPAFNLADSAITVGAVLLI.

This sequence belongs to the peptidase A8 family.

The protein localises to the cell inner membrane. The enzyme catalyses Release of signal peptides from bacterial membrane prolipoproteins. Hydrolyzes -Xaa-Yaa-Zaa-|-(S,diacylglyceryl)Cys-, in which Xaa is hydrophobic (preferably Leu), and Yaa (Ala or Ser) and Zaa (Gly or Ala) have small, neutral side chains.. The protein operates within protein modification; lipoprotein biosynthesis (signal peptide cleavage). Its function is as follows. This protein specifically catalyzes the removal of signal peptides from prolipoproteins. The sequence is that of Lipoprotein signal peptidase from Burkholderia cenocepacia (strain HI2424).